The primary structure comprises 400 residues: Imidazolonepropionase (400 aa).

The Fe(3+) site is built by His-68 and His-70. The Zn(2+) site is built by His-68 and His-70. Arg-77, Tyr-140, and His-173 together coordinate 4-imidazolone-5-propanoate. Residue Tyr-140 participates in N-formimidoyl-L-glutamate binding. His-238 is a binding site for Fe(3+). His-238 provides a ligand contact to Zn(2+). Residue Gln-241 coordinates 4-imidazolone-5-propanoate. Asp-313 is a Fe(3+) binding site. Asp-313 lines the Zn(2+) pocket. The N-formimidoyl-L-glutamate site is built by Asn-315 and Gly-317. Position 318 (Thr-318) interacts with 4-imidazolone-5-propanoate.

The protein belongs to the metallo-dependent hydrolases superfamily. HutI family. Zn(2+) is required as a cofactor. It depends on Fe(3+) as a cofactor.

The protein localises to the cytoplasm. The enzyme catalyses 4-imidazolone-5-propanoate + H2O = N-formimidoyl-L-glutamate. The protein operates within amino-acid degradation; L-histidine degradation into L-glutamate; N-formimidoyl-L-glutamate from L-histidine: step 3/3. Its function is as follows. Catalyzes the hydrolytic cleavage of the carbon-nitrogen bond in imidazolone-5-propanoate to yield N-formimidoyl-L-glutamate. It is the third step in the universal histidine degradation pathway. This Paracoccus denitrificans (strain Pd 1222) protein is Imidazolonepropionase.